The chain runs to 584 residues: ATP-dependent ubiquitin transferase-like protein Cap2 (584 aa).

The interval 1 to 137 (MKQELHHTLL…SGTSNDVELE (137 aa)) is E2-like domain. Cys-90 acts as the For E2-like domain in catalysis. Positions 138–338 (GEFSAYWQSE…LLSRNQSRPD (201 aa)) are linker domain. The tract at residues 339-584 (VGNLSQKRIA…RFSGCNICDE (246 aa)) is adenylation plus E1-like domain. Cys-522 acts as the For E1-like domain in catalysis.

The protein in the C-terminal section; belongs to the HesA/MoeB/ThiF family. As to quaternary structure, interacts with CD-NTase DncV in the presence and absence of phage T2. A Cap2 dimer is bound on either side by a DncV monomer.

Functionally, CD-NTase priming component of a CBASS antiviral system. CBASS (cyclic oligonucleotide-based antiphage signaling system) provides immunity against bacteriophages. The CD-NTase protein (DncV) synthesizes cyclic nucleotides in response to infection; these serve as specific second messenger signals. The signals activate a diverse range of effectors, leading to bacterial cell death and thus abortive phage infection. A type II-A(GA) CBASS system. In terms of biological role, primes DncV; acts as a protein transferase, conjugating DncV, the CD-NTase, to unidentified target(s) in the cell via an E1-E2 ubiquitin transferase-like mechanism. During the conjugation reaction DncV is probably transiently attached to AMP. Protein conjugation requires ATP. Its function is as follows. Protects E.coli against phage infection. When the CBASS operon (capV-dncV-cap2-cap3) is introduced in E.coli MG1655 there is about 100-fold protection against phages P1 and T2. When the operon is introduced in E.coli MG1655 there is a more than 10(3) decrease in the efficiency of T2 plaque formation. Protects 100-fold against phage T5, offers no protection against T7. When the operon is introduced in E.coli MG1655 it protects against phages T2, T4, T5 and T6. Another paper shows the operon confers protection against phages P1, T2, T5 and T6 but not T4 or lambda. This is ATP-dependent ubiquitin transferase-like protein Cap2 from Vibrio cholerae serotype O1 (strain ATCC 39315 / El Tor Inaba N16961).